The following is a 149-amino-acid chain: MNKTYLPSTTSLEPKWYVVDATEQHLGRLATQIAMILRGKTKPIYTPSMDTGDFVIVVNAEKVAVTGKKRTQKIYRRHSGRPGGMKTETFAKLQSRLPERIIEHAVKGMLPKNTLGRNLFTKLKVYAGPDHPHQAQKPEVLTLKTIAGA.

It belongs to the universal ribosomal protein uL13 family. In terms of assembly, part of the 50S ribosomal subunit.

Its function is as follows. This protein is one of the early assembly proteins of the 50S ribosomal subunit, although it is not seen to bind rRNA by itself. It is important during the early stages of 50S assembly. The sequence is that of Large ribosomal subunit protein uL13 from Cyanothece sp. (strain PCC 7425 / ATCC 29141).